We begin with the raw amino-acid sequence, 128 residues long: Iron-sulfur cluster insertion protein ErpA 1 (128 aa).

Iron-sulfur cluster is bound by residues cysteine 47, cysteine 111, and cysteine 113.

The protein belongs to the HesB/IscA family. As to quaternary structure, homodimer. Iron-sulfur cluster is required as a cofactor.

In terms of biological role, required for insertion of 4Fe-4S clusters for at least IspG. The protein is Iron-sulfur cluster insertion protein ErpA 1 of Methylococcus capsulatus (strain ATCC 33009 / NCIMB 11132 / Bath).